The following is a 119-amino-acid chain: Large ribosomal subunit protein uL22 (119 aa).

This sequence belongs to the universal ribosomal protein uL22 family. In terms of assembly, part of the 50S ribosomal subunit.

In terms of biological role, this protein binds specifically to 23S rRNA; its binding is stimulated by other ribosomal proteins, e.g. L4, L17, and L20. It is important during the early stages of 50S assembly. It makes multiple contacts with different domains of the 23S rRNA in the assembled 50S subunit and ribosome. The globular domain of the protein is located near the polypeptide exit tunnel on the outside of the subunit, while an extended beta-hairpin is found that lines the wall of the exit tunnel in the center of the 70S ribosome. This is Large ribosomal subunit protein uL22 from Bifidobacterium animalis subsp. lactis (strain AD011).